We begin with the raw amino-acid sequence, 337 residues long: o-succinylbenzoate synthase (337 aa).

The Proton donor role is filled by lysine 142. The Mg(2+) site is built by aspartate 170, glutamate 199, and aspartate 222. Residue lysine 248 is the Proton acceptor of the active site.

This sequence belongs to the mandelate racemase/muconate lactonizing enzyme family. MenC type 1 subfamily. A divalent metal cation serves as cofactor.

It catalyses the reaction (1R,6R)-6-hydroxy-2-succinyl-cyclohexa-2,4-diene-1-carboxylate = 2-succinylbenzoate + H2O. Its pathway is quinol/quinone metabolism; 1,4-dihydroxy-2-naphthoate biosynthesis; 1,4-dihydroxy-2-naphthoate from chorismate: step 4/7. The protein operates within quinol/quinone metabolism; menaquinone biosynthesis. In terms of biological role, converts 2-succinyl-6-hydroxy-2,4-cyclohexadiene-1-carboxylate (SHCHC) to 2-succinylbenzoate (OSB). In Pasteurella multocida (strain Pm70), this protein is o-succinylbenzoate synthase.